A 647-amino-acid polypeptide reads, in one-letter code: 1-deoxy-D-xylulose-5-phosphate synthase (647 aa).

Residues H72 and 113 to 115 (GHA) each bind thiamine diphosphate. D144 contacts Mg(2+). Thiamine diphosphate contacts are provided by residues 145-146 (GA), N174, Y287, and E370. N174 contacts Mg(2+).

The protein belongs to the transketolase family. DXPS subfamily. Homodimer. The cofactor is Mg(2+). Requires thiamine diphosphate as cofactor.

It carries out the reaction D-glyceraldehyde 3-phosphate + pyruvate + H(+) = 1-deoxy-D-xylulose 5-phosphate + CO2. It participates in metabolic intermediate biosynthesis; 1-deoxy-D-xylulose 5-phosphate biosynthesis; 1-deoxy-D-xylulose 5-phosphate from D-glyceraldehyde 3-phosphate and pyruvate: step 1/1. Catalyzes the acyloin condensation reaction between C atoms 2 and 3 of pyruvate and glyceraldehyde 3-phosphate to yield 1-deoxy-D-xylulose-5-phosphate (DXP). This Synechococcus sp. (strain WH7803) protein is 1-deoxy-D-xylulose-5-phosphate synthase.